The primary structure comprises 375 residues: Hydrogenase-1 small chain (375 aa).

Residues 1 to 47 constitute a signal peptide (tat-type signal); sequence MNTNNEETFYQAMRRKGVSRRSFLKYCSLAATSLGLGAAMTPRIAWA. Residues C64, C67, C162, C196, H234, C237, C262, and C268 each coordinate [4Fe-4S] cluster. 3 residues coordinate [3Fe-4S] cluster: C277, C296, and C299. The interval 353–375 is disordered; sequence HNRHKQQLADAGQQSPDNEDKQA.

Belongs to the [NiFe]/[NiFeSe] hydrogenase small subunit family. In terms of assembly, heterodimer of a large and a small subunit. [4Fe-4S] cluster is required as a cofactor. Requires [3Fe-4S] cluster as cofactor. In terms of processing, predicted to be exported by the Tat system. The position of the signal peptide cleavage has not been experimentally proven.

It localises to the cell membrane. The enzyme catalyses H2 + A = AH2. This is Hydrogenase-1 small chain (hyaA) from Citrobacter freundii.